Reading from the N-terminus, the 154-residue chain is Cytochrome c-550 (154 aa).

Residues 1–20 (MKISIYATLAALSLALPAVA) form the signal peptide. Pyrrolidone carboxylic acid is present on Gln21. Positions 35, 38, 39, and 120 each coordinate heme c. A propeptide spanning residues 150–154 (EGAAN) is cleaved from the precursor.

Binds 1 heme c group covalently per subunit.

This chain is Cytochrome c-550 (cyc), found in Paracoccus versutus (Thiobacillus versutus).